The primary structure comprises 292 residues: Aquaporin-3 (292 aa).

Over 1-24 the chain is Cytoplasmic; sequence MGRQKELVNRCGEMLHIRYRLLRQ. A helical transmembrane segment spans residues 25 to 42; that stretch reads ALAECLGTLILVMFGCGS. At 43-56 the chain is on the extracellular side; sequence VAQVVLSRGTHGGF. A helical membrane pass occupies residues 57-74; sequence LTINLAFGFAVTLGILIA. Residues 75–78 lie on the Cytoplasmic side of the membrane; sequence GQVS. Residues 79-92 constitute an intramembrane region (discontinuously helical); the sequence is GAHLNPAVTFAMCF. An NPA 1 motif is present at residues 83 to 85; it reads NPA. Residues 93 to 100 lie on the Cytoplasmic side of the membrane; the sequence is LAREPWIK. The helical transmembrane segment at 101–121 threads the bilayer; that stretch reads LPVYTLAQTLGAFLGAGIIFG. Over 122–159 the chain is Extracellular; sequence LYYDAIWAFANNQLIVSGPNGTAGIFATYPSGHLDMVN. An N-linked (GlcNAc...) asparagine glycan is attached at Asn-141. A helical membrane pass occupies residues 160–177; it reads GFFDQFIGTASLIVCVLA. Residues 178-189 lie on the Cytoplasmic side of the membrane; that stretch reads IVDPYNNPVPRG. The helical transmembrane segment at 190–206 threads the bilayer; sequence LEAFTVGLVVLVIGTSM. Topologically, residues 207 to 210 are extracellular; the sequence is GFNS. Residues 211 to 224 constitute an intramembrane region (discontinuously helical); sequence GYAVNPARDFGPRL. The NPA 2 signature appears at 215 to 217; that stretch reads NPA. Over 225–242 the chain is Extracellular; the sequence is FTAIAGWGSEVFTTGRHW. The chain crosses the membrane as a helical span at residues 243-264; sequence WWVPIVSPLLGSIAGVFVYQLM. Residues 265–292 are Cytoplasmic-facing; that stretch reads IGCHLEPPPPSTDEENVKLSHVKHKEQM.

This sequence belongs to the MIP/aquaporin (TC 1.A.8) family. Homotetramer; each monomer provides an independent glycerol/water pore. Could also exist in other oligomeric states.

The protein localises to the cell membrane. It localises to the basolateral cell membrane. It catalyses the reaction glycerol(in) = glycerol(out). It carries out the reaction H2O(in) = H2O(out). The enzyme catalyses urea(in) = urea(out). The catalysed reaction is H2O2(out) = H2O2(in). Aquaglyceroporins form homotetrameric transmembrane channels, with each monomer independently mediating glycerol and water transport across the plasma membrane along their osmotic gradient. Could also be permeable to urea. Also participates in cell permeability to H2O2 and H2O2-mediated signaling. In skin, transports glycerol to the epidermis and stratum corneum, where it maintains hydration, elasticity, and supports lipid biosynthesis for barrier repair. In kidney, contributes to the reabsorption of water, helping the body maintain proper fluid balance. This chain is Aquaporin-3, found in Bos taurus (Bovine).